The following is a 159-amino-acid chain: SsrA-binding protein (159 aa).

The segment covering R140–R150 has biased composition (basic and acidic residues). The segment at R140 to R159 is disordered.

Belongs to the SmpB family.

It localises to the cytoplasm. In terms of biological role, required for rescue of stalled ribosomes mediated by trans-translation. Binds to transfer-messenger RNA (tmRNA), required for stable association of tmRNA with ribosomes. tmRNA and SmpB together mimic tRNA shape, replacing the anticodon stem-loop with SmpB. tmRNA is encoded by the ssrA gene; the 2 termini fold to resemble tRNA(Ala) and it encodes a 'tag peptide', a short internal open reading frame. During trans-translation Ala-aminoacylated tmRNA acts like a tRNA, entering the A-site of stalled ribosomes, displacing the stalled mRNA. The ribosome then switches to translate the ORF on the tmRNA; the nascent peptide is terminated with the 'tag peptide' encoded by the tmRNA and targeted for degradation. The ribosome is freed to recommence translation, which seems to be the essential function of trans-translation. The protein is SsrA-binding protein of Alcanivorax borkumensis (strain ATCC 700651 / DSM 11573 / NCIMB 13689 / SK2).